A 169-amino-acid polypeptide reads, in one-letter code: Crossover junction endodeoxyribonuclease RuvC (169 aa).

Residues D7, E67, and D140 contribute to the active site. Mg(2+) contacts are provided by D7, E67, and D140.

Belongs to the RuvC family. In terms of assembly, homodimer which binds Holliday junction (HJ) DNA. The HJ becomes 2-fold symmetrical on binding to RuvC with unstacked arms; it has a different conformation from HJ DNA in complex with RuvA. In the full resolvosome a probable DNA-RuvA(4)-RuvB(12)-RuvC(2) complex forms which resolves the HJ. Requires Mg(2+) as cofactor.

The protein resides in the cytoplasm. The enzyme catalyses Endonucleolytic cleavage at a junction such as a reciprocal single-stranded crossover between two homologous DNA duplexes (Holliday junction).. Functionally, the RuvA-RuvB-RuvC complex processes Holliday junction (HJ) DNA during genetic recombination and DNA repair. Endonuclease that resolves HJ intermediates. Cleaves cruciform DNA by making single-stranded nicks across the HJ at symmetrical positions within the homologous arms, yielding a 5'-phosphate and a 3'-hydroxyl group; requires a central core of homology in the junction. The consensus cleavage sequence is 5'-(A/T)TT(C/G)-3'. Cleavage occurs on the 3'-side of the TT dinucleotide at the point of strand exchange. HJ branch migration catalyzed by RuvA-RuvB allows RuvC to scan DNA until it finds its consensus sequence, where it cleaves and resolves the cruciform DNA. The protein is Crossover junction endodeoxyribonuclease RuvC of Clostridioides difficile (strain 630) (Peptoclostridium difficile).